The following is a 478-amino-acid chain: MTEKTPDDVFKLAKDEKVEYVDVRFCDLPGIMQHFTIPASAFDKSVFDDGLAFDGSSIRGFQSIHESDMLLLPDPETARIDPFRAAKTLNINFFVHDPFTLEPYSRDPRNIARKAENYLISTGIADTAYFGAEAEFYIFDSVSFDSRANGSFYEVDAISGWWNTGAATEADGSPNRGYKVRHKGGYFPVAPNDQYVDLRDKMLTNLINSGFILEKGHHEVGSGGQAEINYQFNSLLHAADDMQLYKYIIKNTAWQNGKTVTFMPKPLFGDNGSGMHCHQSLWKDGAPLMYDETGYAGLSDTARHYIGGLLHHAPSLLAFTNPTVNSYKRLVPGYEAPINLVYSQRNRSACVRIPITGSNPKAKRLEFRSPDSSGNPYLAFSAMLMAGLDGIKNKIEPQAPVDKDLYELPPEEAASIPQTPTQLSDVIDRLEADHEYLTEGGVFTNDLIETWISFKRENEIEPVNIRPHPYEFALYYDV.

A GS beta-grasp domain is found at E16–T100. In terms of domain architecture, GS catalytic spans P108–V478. E133 and E135 together coordinate Mg(2+). E214 serves as a coordination point for ATP. Residues E219 and E227 each contribute to the Mg(2+) site. An ATP-binding site is contributed by Y230–F232. Residues N271 to G272 and G272 each bind L-glutamate. H276 provides a ligand contact to Mg(2+). ATP is bound by residues H278–S280 and S280. The L-glutamate site is built by R329, E335, and R347. ATP contacts are provided by R347, R352, and K361. Residue E366 coordinates Mg(2+). R368 contributes to the L-glutamate binding site. Y406 bears the O-AMP-tyrosine mark.

It belongs to the glutamine synthetase family. In terms of assembly, oligomer of 12 subunits arranged in the form of two hexagons. Requires Mg(2+) as cofactor.

It localises to the cytoplasm. It catalyses the reaction L-glutamate + NH4(+) + ATP = L-glutamine + ADP + phosphate + H(+). Its activity is regulated as follows. When cellular nitrogen levels are high, the C-terminal adenylyl transferase (AT) of GlnE inhibits GlnA by covalent transfer of an adenylyl group from ATP to Tyr-406. Conversely, when nitrogen levels are low, the N-terminal adenylyl removase (AR) of GlnE activates GlnA by removing the adenylyl group by phosphorolysis. The fully adenylated enzyme complex is inactive. In terms of biological role, involved in nitrogen metabolism via ammonium assimilation. Catalyzes the ATP-dependent biosynthesis of glutamine from glutamate and ammonia. Also plays a key role in controlling the ammonia levels within infected host cells and so contributes to the pathogens capacity to inhibit phagosome acidification and phagosome-lysosome fusion. Involved in cell wall biosynthesis via the production of the major component poly-L-glutamine (PLG). PLG synthesis in the cell wall occurs only in nitrogen limiting conditions and on the contrary high nitrogen conditions inhibit PLG synthesis. In Mycobacterium bovis (strain ATCC BAA-935 / AF2122/97), this protein is Glutamine synthetase.